The sequence spans 313 residues: Ribosomal RNA small subunit methyltransferase H (313 aa).

Residues 35 to 37, Asp-55, Phe-79, Asp-101, and Gln-108 contribute to the S-adenosyl-L-methionine site; that span reads GGH.

The protein belongs to the methyltransferase superfamily. RsmH family.

It localises to the cytoplasm. The enzyme catalyses cytidine(1402) in 16S rRNA + S-adenosyl-L-methionine = N(4)-methylcytidine(1402) in 16S rRNA + S-adenosyl-L-homocysteine + H(+). In terms of biological role, specifically methylates the N4 position of cytidine in position 1402 (C1402) of 16S rRNA. In Salmonella newport (strain SL254), this protein is Ribosomal RNA small subunit methyltransferase H.